We begin with the raw amino-acid sequence, 1438 residues long: Pyochelin synthetase PchE (1438 aa).

Residues 6–85 (DSRTALRDWL…AWLDLLACAD (80 aa)) form the Carrier 1 domain. The residue at position 46 (serine 46) is an O-(pantetheine 4'-phosphoryl)serine. Residues 136–442 (RTRDVDPQRL…ARRQGQPRSA (307 aa)) form a condensation/cyclization region. The interval 563-950 (RAAEAPDADA…GRVDQQVKVR (388 aa)) is adenylation. A Carrier 2 domain is found at 1350-1425 (EPLEAHEQAL…GLARHLQAQT (76 aa)). The residue at position 1385 (serine 1385) is an O-(pantetheine 4'-phosphoryl)serine.

The protein belongs to the NRP synthetase family. Pantetheine 4'-phosphate serves as cofactor.

The enzyme catalyses holo-[peptidyl-carrier protein] + L-cysteine + ATP = L-cysteinyl-[peptidyl-carrier protein] + AMP + diphosphate. It functions in the pathway siderophore biosynthesis. Its pathway is antifungal biosynthesis. Involved in the biosynthesis of the siderophore pyochelin. Accepts salicylate activated by PchD at the first peptidyl carrier domain (ArCP), and activates and fixes one molecule of cysteine at the second peptidyl carrier domain (PCP1) via a thioester linkage to the phosphopanthetheine moiety. Then catalyzes the condensation reaction between the salicylate bound to the first site and the cysteine bound to the second site, and the cyclization of the cysteine to form the salicyl-thiazolinyl-S-PCP1 intermediate at the second site. When this intermediate is released by the action of a thioesterase, it produces the antifungal antibiotic dihydroaeruginoic acid (Dha or hydroxyphenyl-thiazolinyl-carboxylate). The polypeptide is Pyochelin synthetase PchE (Pseudomonas aeruginosa (strain UCBPP-PA14)).